Here is a 901-residue protein sequence, read N- to C-terminus: Protein SOK1 (901 aa).

Disordered regions lie at residues 1-87 (MDQP…QNII), 106-139 (RSSG…SDLK), and 162-231 (NDDN…NASN). Residues 10-51 (PTTASNPAPSSTNSSSAPSATNSKQERSSSSLSKPSSVVPSK) are compositionally biased toward low complexity. Phosphoserine occurs at positions 40 and 53. Polar residues-rich tracts occupy residues 74–87 (GDTS…QNII) and 106–115 (RSSGVITPSM). A compositionally biased stretch (low complexity) spans 116 to 138 (SLNASTNATNNDSSGNSANSSDL). Phosphoserine occurs at positions 191 and 193. The segment covering 220–231 (AAQQQPPGNASN) has biased composition (polar residues). Ser-245 carries the phosphoserine modification.

Belongs to the TCP11 family.

It is found in the nucleus. Its function is as follows. High copy suppressor of a cyclic AMP-dependent protein kinase mutant. The polypeptide is Protein SOK1 (SOK1) (Saccharomyces cerevisiae (strain ATCC 204508 / S288c) (Baker's yeast)).